A 412-amino-acid chain; its full sequence is Gamma-glutamyl phosphate reductase (412 aa).

This sequence belongs to the gamma-glutamyl phosphate reductase family.

The protein resides in the cytoplasm. It carries out the reaction L-glutamate 5-semialdehyde + phosphate + NADP(+) = L-glutamyl 5-phosphate + NADPH + H(+). It participates in amino-acid biosynthesis; L-proline biosynthesis; L-glutamate 5-semialdehyde from L-glutamate: step 2/2. Its function is as follows. Catalyzes the NADPH-dependent reduction of L-glutamate 5-phosphate into L-glutamate 5-semialdehyde and phosphate. The product spontaneously undergoes cyclization to form 1-pyrroline-5-carboxylate. The protein is Gamma-glutamyl phosphate reductase of Bartonella henselae (strain ATCC 49882 / DSM 28221 / CCUG 30454 / Houston 1) (Rochalimaea henselae).